An 898-amino-acid polypeptide reads, in one-letter code: Aconitate hydratase 1 (898 aa).

An N-acetylalanine modification is found at alanine 2. Substrate contacts are provided by residues glutamine 90 and 209–211; that span reads DSH. 3 residues coordinate [4Fe-4S] cluster: cysteine 441, cysteine 507, and cysteine 510. Substrate-binding positions include arginine 540, arginine 545, arginine 703, and 784–785; that span reads SR.

Belongs to the aconitase/IPM isomerase family. Monomer. [4Fe-4S] cluster is required as a cofactor. As to expression, mostly expressed in roots, stems and leaves, also present in stems and flowers.

The protein localises to the cytoplasm. It localises to the mitochondrion. The catalysed reaction is citrate = D-threo-isocitrate. The protein operates within carbohydrate metabolism; tricarboxylic acid cycle; isocitrate from oxaloacetate: step 2/2. Functionally, catalyzes the isomerization of citrate to isocitrate via cis-aconitate. Contributes to oxidative stress tolerance. May have a role in respiration. The chain is Aconitate hydratase 1 from Arabidopsis thaliana (Mouse-ear cress).